Consider the following 185-residue polypeptide: Monooxygenase hypC (185 aa).

Transmembrane regions (helical) follow at residues 35-55, 75-95, and 106-126; these read TGTF…PVIL, GHIQ…YAAY, and PFAV…VFMA. An N-linked (GlcNAc...) asparagine glycan is attached at Asn-129. Residues 165–185 traverse the membrane as a helical segment; the sequence is ALFPLSGAVLGLLSTCKIVSF.

This sequence belongs to the anthrone oxygenase family.

It localises to the membrane. Its pathway is mycotoxin biosynthesis. Functionally, monooxygenase; part of the fragmented gene cluster that mediates the biosynthesis of dothistromin (DOTH), a polyketide toxin very similar in structure to the aflatoxin precursor, versicolorin B. The first step of the pathway is the conversion of acetate to norsolorinic acid (NOR) and requires the fatty acid synthase subunits hexA and hexB, as well as the polyketide synthase pksA. PksA combines a hexanoyl starter unit and 7 malonyl-CoA extender units to synthesize the precursor NOR. The hexanoyl starter unit is provided to the acyl-carrier protein (ACP) domain by the fungal fatty acid synthase hexA/hexB. The second step is the conversion of NOR to averantin (AVN) and requires the norsolorinic acid ketoreductase nor1, which catalyzes the dehydration of norsolorinic acid to form (1'S)-averantin. The cytochrome P450 monooxygenase avnA then catalyzes the hydroxylation of AVN to 5'hydroxyaverantin (HAVN). The next step is performed by adhA that transforms HAVN to averufin (AVF). Averufin might then be converted to hydroxyversicolorone by cypX and avfA. Hydroxyversicolorone is further converted versiconal hemiacetal acetate (VHA) by moxY. VHA is then the substrate for the versiconal hemiacetal acetate esterase est1 to yield versiconal (VAL). Versicolorin B synthase vbsA then converts VAL to versicolorin B (VERB) by closing the bisfuran ring. Then, the activity of the versicolorin B desaturase verB leads to versicolorin A (VERA). DotB, a predicted chloroperoxidase, may perform epoxidation of the A-ring of VERA. Alternatively, a cytochrome P450, such as cypX or avnA could catalyze this step. It is also possible that another, uncharacterized, cytochrome P450 enzyme is responsible for this step. Opening of the epoxide could potentially be achieved by the epoxide hydrolase epoA. However, epoA seems not to be required for DOTH biosynthesis, but other epoxide hydrolases may have the ability to complement this hydrolysis. Alternatively, opening of the epoxide ring could be achieved non-enzymatically. The next step is the deoxygenation of ring A to yield the 5,8-dihydroxyanthraquinone which is most likely catalyzed by the NADPH dehydrogenase encoded by ver1. The last stages of DOTH biosynthesis are proposed to involve hydroxylation of the bisfuran. OrdB and norB might have oxidative roles here. An alternative possibility is that cytochrome P450 monoogenases such as avnA and cypX might perform these steps in addition to previously proposed steps. This is Monooxygenase hypC from Dothistroma septosporum (strain NZE10 / CBS 128990) (Red band needle blight fungus).